The following is a 325-amino-acid chain: Anthranilate phosphoribosyltransferase (325 aa).

Residues G74, 77-78, T82, 84-87, 101-109, and S113 contribute to the 5-phospho-alpha-D-ribose 1-diphosphate site; these read GD, NVST, and KHGNVSITS. G74 is an anthranilate binding site. Position 86 (S86) interacts with Mg(2+). N104 lines the anthranilate pocket. R159 contributes to the anthranilate binding site. Positions 217 and 218 each coordinate Mg(2+).

This sequence belongs to the anthranilate phosphoribosyltransferase family. As to quaternary structure, homodimer. Mg(2+) is required as a cofactor.

It carries out the reaction N-(5-phospho-beta-D-ribosyl)anthranilate + diphosphate = 5-phospho-alpha-D-ribose 1-diphosphate + anthranilate. It participates in amino-acid biosynthesis; L-tryptophan biosynthesis; L-tryptophan from chorismate: step 2/5. In terms of biological role, catalyzes the transfer of the phosphoribosyl group of 5-phosphorylribose-1-pyrophosphate (PRPP) to anthranilate to yield N-(5'-phosphoribosyl)-anthranilate (PRA). This Thermococcus kodakarensis (strain ATCC BAA-918 / JCM 12380 / KOD1) (Pyrococcus kodakaraensis (strain KOD1)) protein is Anthranilate phosphoribosyltransferase.